A 199-amino-acid polypeptide reads, in one-letter code: MIAVIDVSGNNLTSLTNALIRLGGHFALTHDAEEIQKASHVILPGVGTARSGMTALQQNGLIDVLRTLTQPLLGICLGMQLLLEYSEEDDIPCLGLIPGVAELLKAERNHPVPHMGWNNLHWQKTSSLQQGLNNSDYVYFVHSYALKADDYALARCQYHEEFTAVVKKGNFYGMQFHPEKSADVGMVLLNNFLSLESTC.

The region spanning 1 to 199 is the Glutamine amidotransferase type-1 domain; that stretch reads MIAVIDVSGN…NNFLSLESTC (199 aa). Residue C76 is the Nucleophile of the active site. Active-site residues include H177 and E179.

Heterodimer of HisH and HisF.

It localises to the cytoplasm. The enzyme catalyses 5-[(5-phospho-1-deoxy-D-ribulos-1-ylimino)methylamino]-1-(5-phospho-beta-D-ribosyl)imidazole-4-carboxamide + L-glutamine = D-erythro-1-(imidazol-4-yl)glycerol 3-phosphate + 5-amino-1-(5-phospho-beta-D-ribosyl)imidazole-4-carboxamide + L-glutamate + H(+). It carries out the reaction L-glutamine + H2O = L-glutamate + NH4(+). It participates in amino-acid biosynthesis; L-histidine biosynthesis; L-histidine from 5-phospho-alpha-D-ribose 1-diphosphate: step 5/9. IGPS catalyzes the conversion of PRFAR and glutamine to IGP, AICAR and glutamate. The HisH subunit provides the glutamine amidotransferase activity that produces the ammonia necessary to HisF for the synthesis of IGP and AICAR. This is Imidazole glycerol phosphate synthase subunit HisH 2 from Legionella pneumophila (strain Paris).